Here is a 787-residue protein sequence, read N- to C-terminus: MFDGFSNNKGKRRSFFRFGSESKNNDSEKSVRKPSVPSTIKKSTNIARTSTAETSAPDIPPRSPNRNAHSRSHSIQAPLQKETLKNTNPFLNAEDTLGDSLELTQSKEASGNDHKGIEYLQENNIIGQRTNPFTTSANSNAHFSKIKRSRPPPPPMDMKSITTSISNNTTKEEIESNNDSERDSIAISSTHNQHRRQRSEAEKLVDDIENYINEHKVSSGSSLSLDTSENSDTKASQDKLPVDVMEAPILRNVSAESSLSYVKPLIVDNEEVNKASNGNLVQSDHLKEFSSNLDDGDDKFSFSTSASGKSTKSLQQVSKDESSGFKAAHFDFAYKSNEHLGSDGSIASARKPLRITNEIDSGSSNEDDDDGLQEKGFVDSESKAFINYASDQGSSIKNDVSTQEPELPSHRRIFRVVNEDRPSFYLNSVNDTGSLTDKHSFDTASSGEYDAKSNFSSQSGLSISKGSKSTVLAALDSNGNTKSSNKTSELNSLNSISESLVPAAHSFNEHTVTIPATVDLPNPVHDAPSERSVKCSPLTSVVSNKSEKSVPLVSSYVEELRLKYYKTSNFLQAPPNLPVALKQKNNLIQPKNIKVKLRTSSKQIGIKHGKVKQKLLALETRNEESDGTATGLKNKINVDHTKEFHKLLGKENETGSISKKEGTDAEQAEDYLKDIPGDEAYNSDDIMAPLREKRGQNGSVDSVSRSNTVVSYYTRSQNRMRSGTLDNDYVNRQKLPTHISLQDYRDANARSNISRQDSVSTTNSDVVDLSYSLGHGLRVANPDSDPE.

Position 1 is an N-acetylmethionine (methionine 1). 3 disordered regions span residues 1-115, 130-200, and 217-238; these read MFDG…NDHK, TNPF…QRSE, and VSSG…ASQD. The segment covering 36–54 has biased composition (polar residues); it reads VPSTIKKSTNIARTSTAET. At serine 63 the chain carries Phosphoserine. The segment covering 130–142 has biased composition (polar residues); the sequence is TNPFTTSANSNAH. A compositionally biased stretch (low complexity) spans 160-169; sequence SITTSISNNT. A compositionally biased stretch (basic and acidic residues) spans 170-184; sequence TKEEIESNNDSERDS. Over residues 218–230 the composition is skewed to low complexity; that stretch reads SSGSSLSLDTSEN. A phosphoserine mark is found at serine 254, serine 313, serine 342, serine 345, serine 390, serine 477, serine 492, serine 546, serine 683, and serine 699.

The protein localises to the cytoplasm. This is an uncharacterized protein from Saccharomyces cerevisiae (strain ATCC 204508 / S288c) (Baker's yeast).